The following is a 453-amino-acid chain: tRNA modification GTPase MnmE (453 aa).

Positions 28, 86, and 125 each coordinate (6S)-5-formyl-5,6,7,8-tetrahydrofolate. The TrmE-type G domain occupies 221–375; that stretch reads GIKIAIVGEP…LIKYLEETSL (155 aa). N231 contacts K(+). Residues 231–236, 250–256, and 276–279 each bind GTP; these read NAGKSS, TNIPGTT, and DTAG. S235 is a Mg(2+) binding site. The K(+) site is built by T250, I252, and T255. Position 256 (T256) interacts with Mg(2+). K453 provides a ligand contact to (6S)-5-formyl-5,6,7,8-tetrahydrofolate.

The protein belongs to the TRAFAC class TrmE-Era-EngA-EngB-Septin-like GTPase superfamily. TrmE GTPase family. Homodimer. Heterotetramer of two MnmE and two MnmG subunits. K(+) is required as a cofactor.

Its subcellular location is the cytoplasm. In terms of biological role, exhibits a very high intrinsic GTPase hydrolysis rate. Involved in the addition of a carboxymethylaminomethyl (cmnm) group at the wobble position (U34) of certain tRNAs, forming tRNA-cmnm(5)s(2)U34. This Mycoplasmoides gallisepticum (strain R(low / passage 15 / clone 2)) (Mycoplasma gallisepticum) protein is tRNA modification GTPase MnmE.